The following is a 104-amino-acid chain: Complex III assembly factor LYRM7 (104 aa).

The residue at position 60 (Ser60) is a Phosphoserine.

Belongs to the complex I LYR family. Interacts with UQCRFS1.

It is found in the mitochondrion matrix. Functionally, assembly factor required for Rieske Fe-S protein UQCRFS1 incorporation into the cytochrome b-c1 (CIII) complex. Functions as a chaperone, binding to this subunit within the mitochondrial matrix and stabilizing it prior to its translocation and insertion into the late CIII dimeric intermediate within the mitochondrial inner membrane. This Rattus norvegicus (Rat) protein is Complex III assembly factor LYRM7 (Lyrm7).